We begin with the raw amino-acid sequence, 168 residues long: Short form salivary protein D7R2 (168 aa).

An N-terminal signal peptide occupies residues 1-21 (MFKKLLLSVGLVWCLISLGQA). 3 disulfides stabilise this stretch: Cys30–Cys62, Cys43–Cys168, and Cys101–Cys120. Residues Glu31 and Arg46 each contribute to the noradrenaline site. Glu31 is a binding site for serotonin. His59, Tyr118, Asp135, and Glu138 together coordinate serotonin. The histamine site is built by Tyr118, Asp135, and Glu138. Noradrenaline is bound by residues Asp135 and Glu138.

The protein belongs to the PBP/GOBP family. In terms of tissue distribution, female saliva (at protein level). Female salivary gland. Not detected in female carcass without salivary glands. Not detected in male tissues.

The protein resides in the secreted. Functionally, modulates blood feeding of female mosquitoes on vertebrate species by binding and sequestering different mediators involved in the host response. Binds serotonin, noradrenaline, histamine and adrenaline. Inhibits histamine-, serotonin- and noradrenaline-induced smooth muscle contraction. Exhibits vasodilating activity. The sequence is that of Short form salivary protein D7R2 from Anopheles gambiae (African malaria mosquito).